The chain runs to 236 residues: Nopaline transport system permease protein NocQ (236 aa).

The region spanning 21 to 222 (AMMTVVVAAC…LLSSVSNRGF (202 aa)) is the ABC transmembrane type-1 domain. A run of 4 helical transmembrane segments spans residues 25–45 (VVVAACSYFFGIIFGSLFAAA), 63–83 (VVRGVPELLIIFLVFFGGGTL), 102–122 (IFVIGVLCISVSAGAYATEVI), and 199–219 (QPFTFYITAFVIFLLLSSVSN).

This sequence belongs to the binding-protein-dependent transport system permease family. HisMQ subfamily.

Its subcellular location is the cell inner membrane. Component of the nopaline active transport system probably consisting of four subunits: Q, M, P and T. This system is also capable of transporting octopine provided that catabolic functions are induced with nopaline. In Agrobacterium fabrum (strain C58 / ATCC 33970) (Agrobacterium tumefaciens (strain C58)), this protein is Nopaline transport system permease protein NocQ (nocQ).